The following is a 343-amino-acid chain: Geranylgeranyl pyrophosphate synthase 1 (343 aa).

Isopentenyl diphosphate-binding residues include lysine 43, arginine 46, and histidine 75. Residues aspartate 82 and aspartate 86 each contribute to the Mg(2+) site. Position 91 (arginine 91) interacts with dimethylallyl diphosphate. Position 92 (arginine 92) interacts with isopentenyl diphosphate. Dimethylallyl diphosphate-binding residues include lysine 169, threonine 170, and glutamine 212. Residue aspartate 215 participates in Mg(2+) binding. 3 residues coordinate dimethylallyl diphosphate: asparagine 219, lysine 229, and lysine 239.

The protein belongs to the FPP/GGPP synthase family. Mg(2+) is required as a cofactor.

It catalyses the reaction isopentenyl diphosphate + dimethylallyl diphosphate = (2E)-geranyl diphosphate + diphosphate. The catalysed reaction is isopentenyl diphosphate + (2E)-geranyl diphosphate = (2E,6E)-farnesyl diphosphate + diphosphate. It carries out the reaction isopentenyl diphosphate + (2E,6E)-farnesyl diphosphate = (2E,6E,10E)-geranylgeranyl diphosphate + diphosphate. Functionally, geranylgeranyl pyrophosphate synthase; part of the gene cluster 4 that mediates the biosynthesis of an isoprenoid secondary metabolite. The chain is Geranylgeranyl pyrophosphate synthase 1 (GGS1) from Zymoseptoria tritici (strain CBS 115943 / IPO323) (Speckled leaf blotch fungus).